The sequence spans 78 residues: Large ribosomal subunit protein bL28 (78 aa).

This sequence belongs to the bacterial ribosomal protein bL28 family.

This chain is Large ribosomal subunit protein bL28, found in Acidithiobacillus ferrooxidans (strain ATCC 23270 / DSM 14882 / CIP 104768 / NCIMB 8455) (Ferrobacillus ferrooxidans (strain ATCC 23270)).